The following is an 839-amino-acid chain: ABC transporter A family member 7 (839 aa).

A run of 7 helical transmembrane segments spans residues 30–50 (GVQI…KLWI), 238–258 (IASL…LPLF), 286–306 (IMTF…ISLI), 321–341 (FALF…AFFL), 352–372 (SIFG…LSLF), 378–398 (VFYY…LCGL), and 419–439 (ILFW…YLDK). Residues 525 to 756 (LIVQGLRKQF…FGDGYSVRID (232 aa)) form the ABC transporter domain. Residue 559–566 (GPNGAGKT) coordinates ATP.

This sequence belongs to the ABC transporter superfamily. ABCA family.

Its subcellular location is the membrane. This is ABC transporter A family member 7 (abcA7) from Dictyostelium discoideum (Social amoeba).